A 916-amino-acid chain; its full sequence is Beta-scruin (916 aa).

Kelch repeat units lie at residues 82–133 (AVLI…YFHG), 134–187 (KVYL…IMDE), 188–235 (RIFV…NNEG), 237–289 (IYVV…TQNK), 291–341 (IWIW…KAGT), and 342–390 (QVFI…GIPV). The tract at residues 393-426 (SPASDITTSKTTRSGSRKTQKTLKDKQQSDIHAR) is disordered. Residues 414 to 425 (TLKDKQQSDIHA) show a composition bias toward basic and acidic residues. Kelch repeat units lie at residues 586-637 (VIIA…YYRG), 638-691 (AIYV…VFND), 692-739 (SIYV…SHGG), 741-793 (LWVM…VCDD), 795-847 (IWLC…ALES), and 849-896 (LYLI…TIPP).

As to expression, sperm.

Its function is as follows. May have an enzymatic role. Found the acrosomal vesicle at the anterior of sperm but not in the acrosomal process. This is Beta-scruin from Limulus polyphemus (Atlantic horseshoe crab).